The following is a 154-amino-acid chain: SsrA-binding protein (154 aa).

Positions 130-154 are disordered; it reads KLHDKRETERRRQDQRDIQRAIKRA. The span at 133 to 154 shows a compositional bias: basic and acidic residues; it reads DKRETERRRQDQRDIQRAIKRA.

The protein belongs to the SmpB family.

Its subcellular location is the cytoplasm. Functionally, required for rescue of stalled ribosomes mediated by trans-translation. Binds to transfer-messenger RNA (tmRNA), required for stable association of tmRNA with ribosomes. tmRNA and SmpB together mimic tRNA shape, replacing the anticodon stem-loop with SmpB. tmRNA is encoded by the ssrA gene; the 2 termini fold to resemble tRNA(Ala) and it encodes a 'tag peptide', a short internal open reading frame. During trans-translation Ala-aminoacylated tmRNA acts like a tRNA, entering the A-site of stalled ribosomes, displacing the stalled mRNA. The ribosome then switches to translate the ORF on the tmRNA; the nascent peptide is terminated with the 'tag peptide' encoded by the tmRNA and targeted for degradation. The ribosome is freed to recommence translation, which seems to be the essential function of trans-translation. This is SsrA-binding protein from Synechococcus elongatus (strain ATCC 33912 / PCC 7942 / FACHB-805) (Anacystis nidulans R2).